The following is a 342-amino-acid chain: tRNA N6-adenosine threonylcarbamoyltransferase (342 aa).

Fe cation-binding residues include H120 and H124. Substrate is bound by residues 142–146 (VVSGG), D175, G188, D192, and N281. D310 lines the Fe cation pocket.

The protein belongs to the KAE1 / TsaD family. Requires Fe(2+) as cofactor.

The protein resides in the cytoplasm. It carries out the reaction L-threonylcarbamoyladenylate + adenosine(37) in tRNA = N(6)-L-threonylcarbamoyladenosine(37) in tRNA + AMP + H(+). Required for the formation of a threonylcarbamoyl group on adenosine at position 37 (t(6)A37) in tRNAs that read codons beginning with adenine. Is involved in the transfer of the threonylcarbamoyl moiety of threonylcarbamoyl-AMP (TC-AMP) to the N6 group of A37, together with TsaE and TsaB. TsaD likely plays a direct catalytic role in this reaction. The protein is tRNA N6-adenosine threonylcarbamoyltransferase of Geobacillus kaustophilus (strain HTA426).